A 182-amino-acid polypeptide reads, in one-letter code: Oligoribonuclease (182 aa).

The 164-residue stretch at 8–171 (LIWIDLEMTG…DDIRESIKEL (164 aa)) folds into the Exonuclease domain. Tyrosine 129 is an active-site residue.

Belongs to the oligoribonuclease family.

It localises to the cytoplasm. Functionally, 3'-to-5' exoribonuclease specific for small oligoribonucleotides. This chain is Oligoribonuclease, found in Haemophilus influenzae (strain PittGG).